Reading from the N-terminus, the 123-residue chain is TYMS opposite strand protein (123 aa).

Positions 57–111 (MRPLPRRIEVRTKRGPQRPAAPERSPQPRLPPSRHPSRRGPRRHLSGCSAPACRI) are disordered. Residues 91–101 (HPSRRGPRRHL) show a composition bias toward basic residues.

This chain is TYMS opposite strand protein (TYMSOS), found in Homo sapiens (Human).